A 94-amino-acid chain; its full sequence is Cystatin-A3 (94 aa).

The Secondary area of contact motif lies at 46-50 (QLVNG).

It belongs to the cystatin family.

It is found in the cytoplasm. Intracellular thiol proteinase inhibitor. The sequence is that of Cystatin-A3 (cpiC) from Dictyostelium discoideum (Social amoeba).